The primary structure comprises 118 residues: Large ribosomal subunit protein uL24 (118 aa).

The protein belongs to the universal ribosomal protein uL24 family. Part of the 50S ribosomal subunit.

One of two assembly initiator proteins, it binds directly to the 5'-end of the 23S rRNA, where it nucleates assembly of the 50S subunit. Its function is as follows. One of the proteins that surrounds the polypeptide exit tunnel on the outside of the subunit. The chain is Large ribosomal subunit protein uL24 from Prochlorococcus marinus (strain NATL2A).